The chain runs to 591 residues: Aspartate--tRNA ligase (591 aa).

Residue Glu173 participates in L-aspartate binding. An aspartate region spans residues 197 to 200 (QLFK). Arg219 is a binding site for L-aspartate. ATP contacts are provided by residues 219-221 (RDE) and Gln228. His448 provides a ligand contact to L-aspartate. Glu482 contributes to the ATP binding site. Residue Arg489 coordinates L-aspartate. An ATP-binding site is contributed by 534–537 (GLDR).

The protein belongs to the class-II aminoacyl-tRNA synthetase family. Type 1 subfamily. In terms of assembly, homodimer.

It localises to the cytoplasm. It catalyses the reaction tRNA(Asp) + L-aspartate + ATP = L-aspartyl-tRNA(Asp) + AMP + diphosphate. Its function is as follows. Catalyzes the attachment of L-aspartate to tRNA(Asp) in a two-step reaction: L-aspartate is first activated by ATP to form Asp-AMP and then transferred to the acceptor end of tRNA(Asp). This chain is Aspartate--tRNA ligase, found in Shewanella frigidimarina (strain NCIMB 400).